The following is a 111-amino-acid chain: Phosphoribosyl-ATP pyrophosphatase (111 aa).

The protein belongs to the PRA-PH family.

The protein resides in the cytoplasm. It catalyses the reaction 1-(5-phospho-beta-D-ribosyl)-ATP + H2O = 1-(5-phospho-beta-D-ribosyl)-5'-AMP + diphosphate + H(+). It participates in amino-acid biosynthesis; L-histidine biosynthesis; L-histidine from 5-phospho-alpha-D-ribose 1-diphosphate: step 2/9. The sequence is that of Phosphoribosyl-ATP pyrophosphatase from Pseudomonas putida (strain W619).